The primary structure comprises 421 residues: 2',3'-cyclic-nucleotide 3'-phosphodiesterase (421 aa).

2 positions are modified to phosphoserine: Ser6 and Ser9. Tyr110 bears the Phosphotyrosine mark. Ser170 is modified (phosphoserine). His251 functions as the Proton acceptor in the catalytic mechanism. Thr253 serves as a coordination point for substrate. The Proton donor role is filled by His330. Position 332 (Thr332) interacts with substrate. Ser359 is modified (phosphoserine). A Cysteine methyl ester modification is found at Cys418. Cys418 carries the S-farnesyl cysteine lipid modification. A propeptide spans Thr419–Ile421 (removed in mature form).

This sequence belongs to the 2H phosphoesterase superfamily. CNPase family. As to quaternary structure, exists as monomers and homodimers.

It is found in the membrane. The protein localises to the melanosome. It catalyses the reaction a nucleoside 2',3'-cyclic phosphate + H2O = a nucleoside 2'-phosphate + H(+). Functionally, catalyzes the formation of 2'-nucleotide products from 2',3'-cyclic substrates. May participate in RNA metabolism in the myelinating cell, CNP is the third most abundant protein in central nervous system myelin. The polypeptide is 2',3'-cyclic-nucleotide 3'-phosphodiesterase (Pongo abelii (Sumatran orangutan)).